A 305-amino-acid polypeptide reads, in one-letter code: Ribonuclease BN (305 aa).

The Zn(2+) site is built by histidine 64, histidine 66, aspartate 68, histidine 69, histidine 141, aspartate 212, and histidine 270. Aspartate 68 acts as the Proton acceptor in catalysis.

The protein belongs to the RNase Z family. RNase BN subfamily. In terms of assembly, homodimer. Zn(2+) serves as cofactor.

Zinc phosphodiesterase, which has both exoribonuclease and endoribonuclease activities. The sequence is that of Ribonuclease BN from Enterobacter sp. (strain 638).